A 679-amino-acid polypeptide reads, in one-letter code: Translation initiation factor IF-2 (679 aa).

One can recognise a tr-type G domain in the interval 178–347 (KRPPIITVMG…LLTSEMQELK (170 aa)). Positions 187–194 (GHVDHGKT) are G1. 187-194 (GHVDHGKT) is a binding site for GTP. A G2 region spans residues 212–216 (GITQH). The G3 stretch occupies residues 233–236 (DTPG). GTP contacts are provided by residues 233-237 (DTPGH) and 287-290 (NKMD). Positions 287-290 (NKMD) are G4. Residues 323–325 (SAK) are G5.

This sequence belongs to the TRAFAC class translation factor GTPase superfamily. Classic translation factor GTPase family. IF-2 subfamily.

The protein resides in the cytoplasm. In terms of biological role, one of the essential components for the initiation of protein synthesis. Protects formylmethionyl-tRNA from spontaneous hydrolysis and promotes its binding to the 30S ribosomal subunits. Also involved in the hydrolysis of GTP during the formation of the 70S ribosomal complex. This is Translation initiation factor IF-2 from Clostridium perfringens (strain ATCC 13124 / DSM 756 / JCM 1290 / NCIMB 6125 / NCTC 8237 / Type A).